A 384-amino-acid chain; its full sequence is Gastrin-releasing peptide receptor (384 aa).

The Extracellular portion of the chain corresponds to 1–39; sequence MDPNNCSHLNLEVDPFLSCNNTFNQTLNPPKMDNWFHPG. Residues asparagine 5, asparagine 20, and asparagine 24 are each glycosylated (N-linked (GlcNAc...) asparagine). A helical transmembrane segment spans residues 40 to 63; sequence IIYVIPAVYGLIIVIGLIGNITLI. Over 64–77 the chain is Cytoplasmic; that stretch reads KIFCTVKSMRNVPN. The chain crosses the membrane as a helical span at residues 78–97; sequence LFISSLALGDLLLLVTCAPV. The Extracellular portion of the chain corresponds to 98 to 115; that stretch reads DASKYLADRWLFGRIGCK. Cysteine 114 and cysteine 197 form a disulfide bridge. The chain crosses the membrane as a helical span at residues 116–137; that stretch reads LIPFIQLTSVGVSVFTLTALSA. The Cytoplasmic portion of the chain corresponds to 138 to 153; the sequence is DRYKAIVRPMDIQASH. The helical transmembrane segment at 154-175 threads the bilayer; the sequence is ALMKICLKAALIWIVSMLLAIP. At 176-209 the chain is on the extracellular side; sequence EAVFSDLHPFHVKDTNQTFISCAPYPHSNELHPK. Residues 210–235 form a helical membrane-spanning segment; the sequence is IHSMASFLVFYIIPLSIISVYYYFIA. Topologically, residues 236–265 are cytoplasmic; that stretch reads RNLIQSAYNLPVEGNIHVKKQIESRKRLAK. The chain crosses the membrane as a helical span at residues 266-286; that stretch reads TVLVFVGLFAFCWLPNHVIYL. The Extracellular segment spans residues 287-299; the sequence is YRSYHYSEVDTSM. The chain crosses the membrane as a helical span at residues 300–326; that stretch reads LHFITSICARLLAFTNSCVNPFALYLL. The Cytoplasmic portion of the chain corresponds to 327 to 384; sequence SKSFRKQFNTQLLCCQPSLLNRSHSTGRSTTCMTSFKSTNPSATFSLINGNICHEGYV. A lipid anchor (S-palmitoyl cysteine) is attached at cysteine 340. Serine 351 carries the phosphoserine modification.

Belongs to the G-protein coupled receptor 1 family. In terms of tissue distribution, expressed in the hippocampal CA1 region (at protein level).

The protein resides in the cell membrane. Functionally, receptor for gastrin-releasing peptide (GRP). Signals via association with G proteins that activate a phosphatidylinositol-calcium second messenger system, resulting in Akt phosphorylation. Contributes to the regulation of food intake. Contributes to the perception of prurient stimuli and transmission of itch signals in the spinal cord that promote scratching behavior, but does not play a role in the perception of pain. Contributes primarily to nonhistaminergic itch sensation. In one study, shown to act in the amygdala as part of an inhibitory network which inhibits memory specifically related to learned fear. In another study, shown to contribute to disinhibition of glutamatergic cells in the auditory cortex via signaling on vasoactive intestinal peptide-expressing cells which leads to enhanced auditory fear memories. Contributes to the induction of sighing through signaling in the pre-Botzinger complex, a cluster of several thousand neurons in the ventrolateral medulla responsible for inspiration during respiratory activity. The chain is Gastrin-releasing peptide receptor (Grpr) from Rattus norvegicus (Rat).